Consider the following 276-residue polypeptide: Formamidopyrimidine-DNA glycosylase (276 aa).

The Schiff-base intermediate with DNA role is filled by Pro2. Residue Glu3 is the Proton donor of the active site. Catalysis depends on Lys59, which acts as the Proton donor; for beta-elimination activity. Residues His92, Arg111, and Lys155 each contribute to the DNA site. The FPG-type zinc finger occupies 239–273 (AVYGQTGAPCPRCGTAIEKIKVGGRGTHFCPTCQQ). The Proton donor; for delta-elimination activity role is filled by Arg263.

The protein belongs to the FPG family. Monomer. Zn(2+) is required as a cofactor.

It catalyses the reaction Hydrolysis of DNA containing ring-opened 7-methylguanine residues, releasing 2,6-diamino-4-hydroxy-5-(N-methyl)formamidopyrimidine.. It carries out the reaction 2'-deoxyribonucleotide-(2'-deoxyribose 5'-phosphate)-2'-deoxyribonucleotide-DNA = a 3'-end 2'-deoxyribonucleotide-(2,3-dehydro-2,3-deoxyribose 5'-phosphate)-DNA + a 5'-end 5'-phospho-2'-deoxyribonucleoside-DNA + H(+). Its function is as follows. Involved in base excision repair of DNA damaged by oxidation or by mutagenic agents. Acts as a DNA glycosylase that recognizes and removes damaged bases. Has a preference for oxidized purines, such as 7,8-dihydro-8-oxoguanine (8-oxoG). Has AP (apurinic/apyrimidinic) lyase activity and introduces nicks in the DNA strand. Cleaves the DNA backbone by beta-delta elimination to generate a single-strand break at the site of the removed base with both 3'- and 5'-phosphates. The polypeptide is Formamidopyrimidine-DNA glycosylase (Exiguobacterium sibiricum (strain DSM 17290 / CCUG 55495 / CIP 109462 / JCM 13490 / 255-15)).